We begin with the raw amino-acid sequence, 35 residues long: Photosystem II reaction center protein T (35 aa).

Residues 3–23 (ALVYTFLLVSTLGIIFFAIFF) form a helical membrane-spanning segment.

This sequence belongs to the PsbT family. PSII is composed of 1 copy each of membrane proteins PsbA, PsbB, PsbC, PsbD, PsbE, PsbF, PsbH, PsbI, PsbJ, PsbK, PsbL, PsbM, PsbT, PsbY, PsbZ, Psb30/Ycf12, at least 3 peripheral proteins of the oxygen-evolving complex and a large number of cofactors. It forms dimeric complexes.

The protein resides in the plastid. It is found in the chloroplast thylakoid membrane. Found at the monomer-monomer interface of the photosystem II (PS II) dimer, plays a role in assembly and dimerization of PSII. PSII is a light-driven water plastoquinone oxidoreductase, using light energy to abstract electrons from H(2)O, generating a proton gradient subsequently used for ATP formation. The polypeptide is Photosystem II reaction center protein T (Saururus cernuus (Lizard's tail)).